The chain runs to 81 residues: Putative membrane protein insertion efficiency factor (81 aa).

The protein belongs to the UPF0161 family.

The protein resides in the cell inner membrane. Could be involved in insertion of integral membrane proteins into the membrane. In Thermosipho melanesiensis (strain DSM 12029 / CIP 104789 / BI429), this protein is Putative membrane protein insertion efficiency factor.